Consider the following 280-residue polypeptide: Probable cell division protein WhiA (280 aa).

Residues 247-279 constitute a DNA-binding region (H-T-H motif); that stretch reads SLEQIANFFFTKYNIKISRSGIQHFSVNLKKLC.

Belongs to the WhiA family.

In terms of biological role, involved in cell division and chromosome segregation. The protein is Probable cell division protein WhiA of Mycoplasma genitalium (strain ATCC 33530 / DSM 19775 / NCTC 10195 / G37) (Mycoplasmoides genitalium).